The sequence spans 124 residues: Seripauperin-17 (124 aa).

The signal sequence occupies residues 1-20; the sequence is MVKLTSIAAGVAAIAAGVAA.

Belongs to the SRP1/TIP1 family. Seripauperin subfamily.

The polypeptide is Seripauperin-17 (PAU17) (Saccharomyces cerevisiae (strain ATCC 204508 / S288c) (Baker's yeast)).